The following is a 418-amino-acid chain: Intracellular coagulation inhibitor 1 (418 aa).

A signal peptide spans 1–24 (MKLGDWKFCLLLFQLMFLTNVCLS). 2 N-linked (GlcNAc...) asparagine glycosylation sites follow: N49 and N404.

The protein belongs to the serpin family. In terms of assembly, monomer. Forms a covalent heterodimer with clotting factor C. Interacts with big defensin. In terms of processing, N-glycosylated. In terms of tissue distribution, expressed in hemocytes (at protein level).

The protein resides in the secreted. Functionally, serine protease inhibitor that specifically inhibits clotting factor C. Does not inhibit clotting factor B or proclotting enzyme. The chain is Intracellular coagulation inhibitor 1 from Tachypleus tridentatus (Japanese horseshoe crab).